We begin with the raw amino-acid sequence, 425 residues long: Phosphoribosylamine--glycine ligase (425 aa).

One can recognise an ATP-grasp domain in the interval 109-315 (KALMQEAGIP…LEELILACVQ (207 aa)). Residue 135 to 195 (IQAQGAPIVV…EECLTGQEVS (61 aa)) participates in ATP binding. Mg(2+) contacts are provided by Glu285 and Asn287.

It belongs to the GARS family. Mg(2+) serves as cofactor. The cofactor is Mn(2+).

The enzyme catalyses 5-phospho-beta-D-ribosylamine + glycine + ATP = N(1)-(5-phospho-beta-D-ribosyl)glycinamide + ADP + phosphate + H(+). It functions in the pathway purine metabolism; IMP biosynthesis via de novo pathway; N(1)-(5-phospho-D-ribosyl)glycinamide from 5-phospho-alpha-D-ribose 1-diphosphate: step 2/2. This chain is Phosphoribosylamine--glycine ligase, found in Nostoc sp. (strain PCC 7120 / SAG 25.82 / UTEX 2576).